The primary structure comprises 350 residues: Protein YIPF3 (350 aa).

Residues 1–10 (MATTAAPAGG) show a composition bias toward low complexity. The disordered stretch occupies residues 1–51 (MATTAAPAGGARNGAGPEWGGFEENIQGGGSAVIDMENMDDTSGSSFEDMG). A2 is modified (N-acetylalanine). Topologically, residues 2 to 148 (ATTAAPAGGA…PIKMVNFPQK (147 aa)) are cytoplasmic. The chain crosses the membrane as a helical span at residues 149 to 169 (IAGELYGPLMLVFTLVAILLH). Over 170-187 (GMKTSDTIIREGTLMGTA) the chain is Lumenal. A helical membrane pass occupies residues 188 to 208 (IGTCFGYWLGVSSFIYFLAYL). Residues 209–214 (CNAQIT) lie on the Cytoplasmic side of the membrane. A helical transmembrane segment spans residues 215–237 (MLQMLALLGYGLFGHCIVLFITY). Topologically, residues 238–240 (NIH) are lumenal. A helical membrane pass occupies residues 241 to 263 (LHALFYLFWLLVGGLSTLRMVAV). At 264–274 (LVSRTVGPTQR) the chain is on the cytoplasmic side. The helical transmembrane segment at 275-295 (LLLCGTLAALHMLFLLYLHFA) threads the bilayer. Residues 296 to 350 (YHKVVEGILDTLEGPNIPPIQRVPRDIPAMLPAARLPTTVLNATAKAVAVTLQSH) are Lumenal-facing. T333 and T334 each carry an O-linked (GalNAc...) threonine glycan. N-linked (GlcNAc...) asparagine glycosylation is present at N337. Residues T339 and T346 are each glycosylated (O-linked (GalNAc...) threonine).

It belongs to the YIP1 family. Interacts with YIPF4 and YIPF5. N-glycosylated in the ER (40 kDa form I), then O-glycosylated in the Golgi apparatus (46 kDa form II), the C-terminal lumenal region is later removed in the Golgi apparatus to produce a 36 kDa form III. O-glycosylated with core 1-like and core 2-like glycans. O-glycan heterogeneity at Thr-346: HexNAc (minor), HexHexNAc (major), Hex1HexNAc2 (minor), Hex2HexNAc2 (minor) and dHex1Hex2HexNAc2 (minor). In terms of tissue distribution, expressed by nucleated hematopoietic cells (at protein level).

Its subcellular location is the cell membrane. It is found in the cytoplasm. The protein localises to the golgi apparatus. It localises to the cis-Golgi network membrane. Functionally, involved in the maintenance of the Golgi structure. May play a role in hematopoiesis. The polypeptide is Protein YIPF3 (YIPF3) (Homo sapiens (Human)).